Reading from the N-terminus, the 141-residue chain is Large ribosomal subunit protein uL11 (141 aa).

This sequence belongs to the universal ribosomal protein uL11 family. As to quaternary structure, part of the ribosomal stalk of the 50S ribosomal subunit. Interacts with L10 and the large rRNA to form the base of the stalk. L10 forms an elongated spine to which L12 dimers bind in a sequential fashion forming a multimeric L10(L12)X complex. In terms of processing, one or more lysine residues are methylated.

Functionally, forms part of the ribosomal stalk which helps the ribosome interact with GTP-bound translation factors. This Ruegeria sp. (strain TM1040) (Silicibacter sp.) protein is Large ribosomal subunit protein uL11.